Reading from the N-terminus, the 1536-residue chain is Glycogen debranching enzyme (1536 aa).

Catalysis depends on residues Asp535, His538, and Asp670.

This sequence belongs to the glycogen debranching enzyme family. In terms of assembly, interacts with IGD1.

It localises to the mitochondrion. Its subcellular location is the cytoplasm. It carries out the reaction Transfers a segment of a (1-&gt;4)-alpha-D-glucan to a new position in an acceptor, which may be glucose or a (1-&gt;4)-alpha-D-glucan.. The catalysed reaction is Hydrolysis of (1-&gt;6)-alpha-D-glucosidic branch linkages in glycogen phosphorylase limit dextrin.. Its activity is regulated as follows. Activity is inhibited by IGD1. Multifunctional enzyme acting as 1,4-alpha-D-glucan:1,4-alpha-D-glucan 4-alpha-D-glycosyltransferase and amylo-1,6-glucosidase in glycogen degradation. The sequence is that of Glycogen debranching enzyme (GDB1) from Saccharomyces cerevisiae (strain ATCC 204508 / S288c) (Baker's yeast).